A 244-amino-acid polypeptide reads, in one-letter code: 1-(5-phosphoribosyl)-5-[(5-phosphoribosylamino)methylideneamino] imidazole-4-carboxamide isomerase (244 aa).

The active-site Proton acceptor is the aspartate 10. The Proton donor role is filled by aspartate 129.

This sequence belongs to the HisA/HisF family.

The protein resides in the cytoplasm. It carries out the reaction 1-(5-phospho-beta-D-ribosyl)-5-[(5-phospho-beta-D-ribosylamino)methylideneamino]imidazole-4-carboxamide = 5-[(5-phospho-1-deoxy-D-ribulos-1-ylimino)methylamino]-1-(5-phospho-beta-D-ribosyl)imidazole-4-carboxamide. The protein operates within amino-acid biosynthesis; L-histidine biosynthesis; L-histidine from 5-phospho-alpha-D-ribose 1-diphosphate: step 4/9. The sequence is that of 1-(5-phosphoribosyl)-5-[(5-phosphoribosylamino)methylideneamino] imidazole-4-carboxamide isomerase from Rhodococcus erythropolis (strain PR4 / NBRC 100887).